Here is a 246-residue protein sequence, read N- to C-terminus: 1-(5-phosphoribosyl)-5-[(5-phosphoribosylamino)methylideneamino] imidazole-4-carboxamide isomerase (246 aa).

The active-site Proton acceptor is Asp8. The active-site Proton donor is Asp131.

The protein belongs to the HisA/HisF family.

Its subcellular location is the cytoplasm. It catalyses the reaction 1-(5-phospho-beta-D-ribosyl)-5-[(5-phospho-beta-D-ribosylamino)methylideneamino]imidazole-4-carboxamide = 5-[(5-phospho-1-deoxy-D-ribulos-1-ylimino)methylamino]-1-(5-phospho-beta-D-ribosyl)imidazole-4-carboxamide. It participates in amino-acid biosynthesis; L-histidine biosynthesis; L-histidine from 5-phospho-alpha-D-ribose 1-diphosphate: step 4/9. This Bordetella petrii (strain ATCC BAA-461 / DSM 12804 / CCUG 43448) protein is 1-(5-phosphoribosyl)-5-[(5-phosphoribosylamino)methylideneamino] imidazole-4-carboxamide isomerase.